A 155-amino-acid chain; its full sequence is Transcription antitermination protein NusB (155 aa).

This sequence belongs to the NusB family.

Its function is as follows. Involved in transcription antitermination. Required for transcription of ribosomal RNA (rRNA) genes. Binds specifically to the boxA antiterminator sequence of the ribosomal RNA (rrn) operons. This is Transcription antitermination protein NusB from Azoarcus sp. (strain BH72).